The sequence spans 129 residues: uncharacterized protein (129 aa).

Residues 91 to 114 are compositionally biased toward basic and acidic residues; sequence ASEKVGEMKEAASEKASEMKEAVS. A disordered region spans residues 91–129; the sequence is ASEKVGEMKEAASEKASEMKEAVSEKATQAVDAVKEATK.

Belongs to the LEA type 1 family.

This is an uncharacterized protein from Haemophilus influenzae (strain ATCC 51907 / DSM 11121 / KW20 / Rd).